We begin with the raw amino-acid sequence, 827 residues long: Periplasmic nitrate reductase (827 aa).

Positions 1-34 (MSLTRRDFIKANAVAATAAAAGIATPAIAQPAKA) form a signal peptide, tat-type signal. The 4Fe-4S Mo/W bis-MGD-type domain maps to 36–92 (IRWDKGVCRFCGTGCAVLVGVQDGRVVATQGDPDSPVNRGLNCIKGYFLSKIMYGED). Residues C43, C46, C50, and C78 each contribute to the [4Fe-4S] cluster site. Mo-bis(molybdopterin guanine dinucleotide) contacts are provided by residues K80, Q148, N173, C177, 210 to 217 (WGSNMAEM), 241 to 245 (STFEH), 260 to 262 (QTD), M371, Q375, N481, 507 to 508 (SD), K530, D557, and 717 to 726 (TGRVLEHWHS). Residue F793 coordinates substrate. Mo-bis(molybdopterin guanine dinucleotide)-binding residues include N801 and K818.

The protein belongs to the prokaryotic molybdopterin-containing oxidoreductase family. NasA/NapA/NarB subfamily. As to quaternary structure, component of the periplasmic nitrate reductase NapAB complex composed of NapA and NapB. [4Fe-4S] cluster serves as cofactor. Requires Mo-bis(molybdopterin guanine dinucleotide) as cofactor. In terms of processing, predicted to be exported by the Tat system. The position of the signal peptide cleavage has not been experimentally proven.

It localises to the periplasm. It carries out the reaction 2 Fe(II)-[cytochrome] + nitrate + 2 H(+) = 2 Fe(III)-[cytochrome] + nitrite + H2O. Catalytic subunit of the periplasmic nitrate reductase complex NapAB. Receives electrons from NapB and catalyzes the reduction of nitrate to nitrite. The chain is Periplasmic nitrate reductase from Paramagnetospirillum magneticum (strain ATCC 700264 / AMB-1) (Magnetospirillum magneticum).